Consider the following 468-residue polypeptide: Lactate utilization protein B (468 aa).

4Fe-4S ferredoxin-type domains follow at residues 303 to 333 and 352 to 381; these read GTQF…GHAY and YENY…LHEL. Residues C312, C315, C318, C322, C365, C368, and C372 each contribute to the [4Fe-4S] cluster site. The interval 442–468 is disordered; the sequence is PAWTDSKDLPQPNKQTVRDWFKKRGNA. A compositionally biased stretch (basic and acidic residues) spans 457 to 468; the sequence is TVRDWFKKRGNA.

The protein belongs to the LutB/YkgF family.

In terms of biological role, is involved in L-lactate degradation and allows cells to grow with lactate as the sole carbon source. Has probably a role as an electron transporter during oxidation of L-lactate. This chain is Lactate utilization protein B, found in Exiguobacterium sp. (strain ATCC BAA-1283 / AT1b).